We begin with the raw amino-acid sequence, 182 residues long: Probable nicotinate-nucleotide adenylyltransferase (182 aa).

Belongs to the NadD family.

It catalyses the reaction nicotinate beta-D-ribonucleotide + ATP + H(+) = deamido-NAD(+) + diphosphate. It functions in the pathway cofactor biosynthesis; NAD(+) biosynthesis; deamido-NAD(+) from nicotinate D-ribonucleotide: step 1/1. Its function is as follows. Catalyzes the reversible adenylation of nicotinate mononucleotide (NaMN) to nicotinic acid adenine dinucleotide (NaAD). This chain is Probable nicotinate-nucleotide adenylyltransferase, found in Aliarcobacter butzleri (strain RM4018) (Arcobacter butzleri).